A 234-amino-acid chain; its full sequence is MAASRWARKAVVLLCASDLLLLLLLLPPPGSCAAEGSPGTPDESTPPPRKKKKDIRDYNDADMARLLEQWEKDDDIEEGDLPEHKRPSAPVDFSKIDPSKPESILKMTKKGKTLMMFVTVSGSPTEKETEEITSLWQGSLFNANYDVQRFIVGSDRAIFMLRDGSYAWEIKDFLVGQDRCADVTLEGQVYPGKGGGSKEKNKTKQDKGKKKKEGDLKSRSSKEENRAGNKREDL.

An N-terminal signal peptide occupies residues 1–33 (MAASRWARKAVVLLCASDLLLLLLLLPPPGSCA). A chaperone domain region spans residues 1–164 (MAASRWARKA…DRAIFMLRDG (164 aa)). Disordered stretches follow at residues 31–95 (SCAA…DFSK) and 187–234 (GQVY…REDL). A compositionally biased stretch (basic and acidic residues) spans 54 to 70 (DIRDYNDADMARLLEQW). A compositionally biased stretch (acidic residues) spans 71–80 (EKDDDIEEGD). Residues 165–204 (SYAWEIKDFLVGQDRCADVTLEGQVYPGKGGGSKEKNKTK) form an escort domain region. Positions 196-234 (GSKEKNKTKQDKGKKKKEGDLKSRSSKEENRAGNKREDL) are enriched in basic and acidic residues. N-linked (GlcNAc...) asparagine glycosylation occurs at asparagine 201. Positions 231–234 (REDL) match the Prevents secretion from ER motif.

The protein belongs to the MESD family. In terms of assembly, monomer. Interacts with LRP5; the interaction prevents LRP5 from forming aggregates and chaperones LRP6 to the plasma membrane. Interacts with LRP6; the interaction prevents LRP6 from forming aggregates and chaperones LRP6 to the plasma membrane. Interacts with LRP4; the interaction promotes glycosylation of LRP4 and its cell-surface expression.

It is found in the endoplasmic reticulum. Functionally, chaperone specifically assisting the folding of beta-propeller/EGF modules within the family of low-density lipoprotein receptors (LDLRs). Acts as a modulator of the Wnt pathway through chaperoning the coreceptors of the canonical Wnt pathway, LRP5 and LRP6, to the plasma membrane. Essential for specification of embryonic polarity and mesoderm induction. Plays an essential role in neuromuscular junction (NMJ) formation by promoting cell-surface expression of LRP4. May regulate phagocytosis of apoptotic retinal pigment epithelium (RPE) cells. This chain is LRP chaperone MESD, found in Homo sapiens (Human).